The primary structure comprises 656 residues: DNA ligase (656 aa).

Residues 32–36 (DAVYD) and 81–82 (SL) contribute to the NAD(+) site. The active-site N6-AMP-lysine intermediate is the lysine 112. 3 residues coordinate NAD(+): arginine 133, glutamate 167, and lysine 306. 4 residues coordinate Zn(2+): cysteine 400, cysteine 403, cysteine 416, and cysteine 421. One can recognise a BRCT domain in the interval 577-656 (ESSSVFSNKT…ELLKRLKEFD (80 aa)).

The protein belongs to the NAD-dependent DNA ligase family. LigA subfamily. Mg(2+) serves as cofactor. The cofactor is Mn(2+).

The enzyme catalyses NAD(+) + (deoxyribonucleotide)n-3'-hydroxyl + 5'-phospho-(deoxyribonucleotide)m = (deoxyribonucleotide)n+m + AMP + beta-nicotinamide D-nucleotide.. Its function is as follows. DNA ligase that catalyzes the formation of phosphodiester linkages between 5'-phosphoryl and 3'-hydroxyl groups in double-stranded DNA using NAD as a coenzyme and as the energy source for the reaction. It is essential for DNA replication and repair of damaged DNA. The protein is DNA ligase of Helicobacter pylori (strain Shi470).